The chain runs to 633 residues: UvrABC system protein C (633 aa).

Residues 21 to 100 (TDPGVYKFLD…IKELQPRYNV (80 aa)) form the GIY-YIG domain. One can recognise a UVR domain in the interval 214 to 249 (QELMDLLKDEMQRQSDAHNFEEAARLRDQVKALKDY).

The protein belongs to the UvrC family. As to quaternary structure, interacts with UvrB in an incision complex.

Its subcellular location is the cytoplasm. In terms of biological role, the UvrABC repair system catalyzes the recognition and processing of DNA lesions. UvrC both incises the 5' and 3' sides of the lesion. The N-terminal half is responsible for the 3' incision and the C-terminal half is responsible for the 5' incision. This Salinibacter ruber (strain DSM 13855 / M31) protein is UvrABC system protein C.